Reading from the N-terminus, the 399-residue chain is UDP-N-acetylglucosamine--N-acetylmuramyl-(pentapeptide) pyrophosphoryl-undecaprenol N-acetylglucosamine transferase (399 aa).

UDP-N-acetyl-alpha-D-glucosamine-binding positions include 29–31, Asn148, Arg185, Ser219, and Gln318; that span reads TAG.

The protein belongs to the glycosyltransferase 28 family. MurG subfamily.

The protein localises to the cell membrane. It catalyses the reaction di-trans,octa-cis-undecaprenyl diphospho-N-acetyl-alpha-D-muramoyl-L-alanyl-D-glutamyl-meso-2,6-diaminopimeloyl-D-alanyl-D-alanine + UDP-N-acetyl-alpha-D-glucosamine = di-trans,octa-cis-undecaprenyl diphospho-[N-acetyl-alpha-D-glucosaminyl-(1-&gt;4)]-N-acetyl-alpha-D-muramoyl-L-alanyl-D-glutamyl-meso-2,6-diaminopimeloyl-D-alanyl-D-alanine + UDP + H(+). It participates in cell wall biogenesis; peptidoglycan biosynthesis. Functionally, cell wall formation. Catalyzes the transfer of a GlcNAc subunit on undecaprenyl-pyrophosphoryl-MurNAc-pentapeptide (lipid intermediate I) to form undecaprenyl-pyrophosphoryl-MurNAc-(pentapeptide)GlcNAc (lipid intermediate II). In Mycobacterium ulcerans (strain Agy99), this protein is UDP-N-acetylglucosamine--N-acetylmuramyl-(pentapeptide) pyrophosphoryl-undecaprenol N-acetylglucosamine transferase.